Here is a 231-residue protein sequence, read N- to C-terminus: CD302 antigen (231 aa).

Residues 1 to 21 (MSAAVVATLPTLLLLLGLAAA) form the signal peptide. Residues 22-169 (DCPSSSWVQF…YEKKYLPDHH (148 aa)) are Extracellular-facing. Residues 31–153 (FQSNCYIFLQ…CEVSSVEGAL (123 aa)) enclose the C-type lectin domain. N-linked (GlcNAc...) asparagine glycosylation occurs at N110. A disulfide bridge links C129 with C144. Residues 170–190 (ILITALVIASTTILTITGAVV) traverse the membrane as a helical segment. Residues 191-231 (WFLYKRNLTSGLTNTAYTTAPQLPYNDDCILVDAEENEYVA) are Cytoplasmic-facing.

The protein localises to the membrane. It is found in the cell projection. It localises to the filopodium. The protein resides in the cytoplasm. Its subcellular location is the cell cortex. The protein localises to the microvillus. In terms of biological role, potential multifunctional C-type lectin receptor that may play roles in endocytosis and phagocytosis as well as in cell adhesion and migration. The protein is CD302 antigen of Trichosurus vulpecula (Brush-tailed possum).